The sequence spans 327 residues: Fructose-1,6-bisphosphatase class 1 (327 aa).

The Mg(2+) site is built by E84, D103, L105, and D106. Residues 106–109 (DGSS), N197, and K263 contribute to the substrate site. Residue E269 participates in Mg(2+) binding.

The protein belongs to the FBPase class 1 family. In terms of assembly, homotetramer. Mg(2+) serves as cofactor.

Its subcellular location is the cytoplasm. It catalyses the reaction beta-D-fructose 1,6-bisphosphate + H2O = beta-D-fructose 6-phosphate + phosphate. It functions in the pathway carbohydrate biosynthesis; gluconeogenesis. In Idiomarina loihiensis (strain ATCC BAA-735 / DSM 15497 / L2-TR), this protein is Fructose-1,6-bisphosphatase class 1.